Here is a 62-residue protein sequence, read N- to C-terminus: Defensin BmKDfsin6 (62 aa).

The signal sequence occupies residues M1–A24. 3 disulfides stabilise this stretch: C28/C49, C35/C57, and C39/C59.

It belongs to the invertebrate defensin family. Type 2 subfamily. In terms of tissue distribution, highly expressed in non-venom gland (hemolymph) and moderately expressed in venom gland.

It is found in the secreted. In terms of biological role, antibacterial peptide active against Gram-positive bacteria, but not on Gram-negative bacteria. Also has weak blocking activity on Kv1.1/KCNA1, Kv1.2/KCNA2, Kv1.3/KCNA3, KCa3.1/KCNN4/IK, KCa2.3/KCNN3/SK3 and Kv11.1/KCNH2/ERG1 channels (tested at 1 uM). It inhibits potassium channel current by interacting with the pore region. The protein is Defensin BmKDfsin6 of Olivierus martensii (Manchurian scorpion).